A 55-amino-acid polypeptide reads, in one-letter code: Ribosome biogenesis protein Nop10 (55 aa).

Belongs to the NOP10 family.

Its function is as follows. Involved in ribosome biogenesis; more specifically in 18S rRNA pseudouridylation and in cleavage of pre-rRNA. The chain is Ribosome biogenesis protein Nop10 from Methanosphaera stadtmanae (strain ATCC 43021 / DSM 3091 / JCM 11832 / MCB-3).